The chain runs to 239 residues: Probable transcriptional regulatory protein Bcer98_0465 (239 aa).

Belongs to the TACO1 family. YeeN subfamily.

It localises to the cytoplasm. In Bacillus cytotoxicus (strain DSM 22905 / CIP 110041 / 391-98 / NVH 391-98), this protein is Probable transcriptional regulatory protein Bcer98_0465.